We begin with the raw amino-acid sequence, 387 residues long: Dual-specificity RNA methyltransferase RlmN (387 aa).

Catalysis depends on glutamate 110, which acts as the Proton acceptor. One can recognise a Radical SAM core domain in the interval 117-349 (VGKAGALCVS…NRAGYASPIR (233 aa)). An intrachain disulfide couples cysteine 124 to cysteine 360. Residues cysteine 131, cysteine 135, and cysteine 138 each contribute to the [4Fe-4S] cluster site. Residues 186–187 (GE), serine 218, 240–242 (SLH), and asparagine 317 each bind S-adenosyl-L-methionine. The active-site S-methylcysteine intermediate is cysteine 360.

This sequence belongs to the radical SAM superfamily. RlmN family. It depends on [4Fe-4S] cluster as a cofactor.

Its subcellular location is the cytoplasm. It catalyses the reaction adenosine(2503) in 23S rRNA + 2 reduced [2Fe-2S]-[ferredoxin] + 2 S-adenosyl-L-methionine = 2-methyladenosine(2503) in 23S rRNA + 5'-deoxyadenosine + L-methionine + 2 oxidized [2Fe-2S]-[ferredoxin] + S-adenosyl-L-homocysteine. It carries out the reaction adenosine(37) in tRNA + 2 reduced [2Fe-2S]-[ferredoxin] + 2 S-adenosyl-L-methionine = 2-methyladenosine(37) in tRNA + 5'-deoxyadenosine + L-methionine + 2 oxidized [2Fe-2S]-[ferredoxin] + S-adenosyl-L-homocysteine. Functionally, specifically methylates position 2 of adenine 2503 in 23S rRNA and position 2 of adenine 37 in tRNAs. m2A2503 modification seems to play a crucial role in the proofreading step occurring at the peptidyl transferase center and thus would serve to optimize ribosomal fidelity. This is Dual-specificity RNA methyltransferase RlmN from Hyphomonas neptunium (strain ATCC 15444).